The primary structure comprises 1023 residues: Cell division cycle-associated protein 2 (1023 aa).

The span at 1–14 shows a compositional bias: basic and acidic residues; the sequence is MDANSKDKPPETKE. Residues 1-21 form a disordered region; that stretch reads MDANSKDKPPETKESAMNNAG. Phosphoserine is present on residues Ser98, Ser120, Ser126, Ser131, Ser210, Ser291, and Ser309. The residue at position 312 (Thr312) is a Phosphothreonine. The 61-residue stretch at 389–449 folds into the PP1-binding domain; sequence KRKRVTFGED…PEPLPQPDFD (61 aa). Phosphoserine occurs at positions 400 and 407. A Phosphothreonine modification is found at Thr412. A Phosphoserine modification is found at Ser437. Residues 542 to 580 form a disordered region; sequence SQETKCTKRALPKKSQVLKSCRKKKGKGKKSVQKSLYGE. Residues 561–573 are compositionally biased toward basic residues; sequence SCRKKKGKGKKSV. A phosphoserine mark is found at Ser591 and Ser614. The interval 667–729 is disordered; it reads SSLGNATSDE…ERVASDSPKP (63 aa). Residues 679 to 691 are compositionally biased toward low complexity; that stretch reads NTNIMNINENKNI. Residues 696–706 are compositionally biased toward basic and acidic residues; that stretch reads NKSESENEPKA. Phosphoserine is present on residues Ser710 and Ser756. Lys762 is covalently cross-linked (Glycyl lysine isopeptide (Lys-Gly) (interchain with G-Cter in SUMO2)). The segment covering 803–816 has biased composition (basic and acidic residues); sequence ESKSQSEDLGRKPM. Disordered stretches follow at residues 803–860 and 936–1023; these read ESKS…GSSV and SPIK…ERKQ. Phosphoserine occurs at positions 936 and 977. Composition is skewed to polar residues over residues 979-992 and 1000-1010; these read CIST…TSQF and SLNGKGESSLT. Position 1000 is a phosphoserine (Ser1000). The span at 1013–1023 shows a compositional bias: basic and acidic residues; the sequence is ERIEHNGERKQ.

In terms of assembly, interacts with PPP1CC. In terms of processing, phosphorylated by CDK1. May regulate its subcellular location. Ubiquitously expressed.

The protein localises to the nucleus. Its function is as follows. Regulator of chromosome structure during mitosis required for condensin-depleted chromosomes to retain their compact architecture through anaphase. Acts by mediating the recruitment of phopsphatase PP1-gamma subunit (PPP1CC) to chromatin at anaphase and into the following interphase. At anaphase onset, its association with chromatin targets a pool of PPP1CC to dephosphorylate substrates. The protein is Cell division cycle-associated protein 2 (CDCA2) of Homo sapiens (Human).